The following is a 360-amino-acid chain: Inward rectifier potassium channel 13 (360 aa).

The Cytoplasmic segment spans residues 1-50 (MDSSNCKVNAPLLSQRHRRMVTKDGHSTLQMDGAQRGLVYLRDAWGILMD). Residues 51 to 77 (MRWRWMMLVFSASFVVHWLVFAVLWYA) form a helical membrane-spanning segment. Residues 78–105 (VAEMNGDLEIDHDVPPENHTICVKHITS) are Extracellular-facing. An intramembrane region (helical; Pore-forming) is located at residues 106–122 (FTAAFSFSLETQLTIGY). The Selectivity filter motif lies at 119 to 124 (TIGYGT). Over 123–131 (GTMFPSGDC) the chain is Extracellular. A helical transmembrane segment spans residues 132-157 (PSAIALLAIQMLLGLMLEAFITGAFV). The Cytoplasmic portion of the chain corresponds to 158–360 (AKIARPKNRA…FQIAETGLTE (203 aa)). Serine 287 carries the post-translational modification Phosphoserine; by PKA.

The protein belongs to the inward rectifier-type potassium channel (TC 1.A.2.1) family. KCNJ13 subfamily. Homotetramer. Interacts with RAB28; the interaction may facilitate cone outer segments phagocytosis. Phosphorylation at Ser-287 by PKA increases ionic currents. Expressed in retina.

It localises to the membrane. It is found in the cell membrane. The catalysed reaction is K(+)(in) = K(+)(out). With respect to regulation, inhibited by Ba(2+) and Cs(+), although sensitivity to those inhibitors is much lower than in other Kir channels. In terms of biological role, inward rectifier potassium channels are characterized by a greater tendency to allow potassium to flow into the cell rather than out of it. Their voltage dependence is regulated by the concentration of extracellular potassium; as external potassium is raised, the voltage range of the channel opening shifts to more positive voltages. The inward rectification is mainly due to the blockage of outward current by internal magnesium. KCNJ13 has a very low single channel conductance, low sensitivity to block by external barium and cesium, and no dependence of its inward rectification properties on the internal blocking particle magnesium. This Mus musculus (Mouse) protein is Inward rectifier potassium channel 13.